The primary structure comprises 358 residues: MFDQLDIVEERYEQLNELLSDPDVVNDSDKLRKYSKEQADLQKTVDVYRNYKAKKEELADIEEMLSETDDKEEVEMLKEESSGIKAELPNLEEELKILLIPKDPNDDKDVIVEIRAAAGGDEAAIFAGDLMRMYSKYAESQGFKTEIVEASESDHGGYKEISFSVSGNGAYSKLKFENGAHRVQRVPETESGGRIHTSTATVAVLPEVEDVEIEIRNEDLKIDTYRSSGAGGQHVNTTDSAVRITHLPTGVIATSSEKSQIQNREKAMKVLKARLYDMKVQEEQQKYASQRKSAVGTGDRSERIRTYNYPQSRVTDHRIGLTLQKLGQIMEGHLEEIIDALTLSEQTDKLKELNNGEL.

Position 233 is an N5-methylglutamine (glutamine 233).

It belongs to the prokaryotic/mitochondrial release factor family. Methylated by PrmC. Methylation increases the termination efficiency of RF1.

The protein localises to the cytoplasm. Peptide chain release factor 1 directs the termination of translation in response to the peptide chain termination codons UAG and UAA. This is Peptide chain release factor 1 from Staphylococcus aureus (strain MRSA252).